A 307-amino-acid polypeptide reads, in one-letter code: Universal stress protein A family protein C25B2.10 (307 aa).

A disordered region spans residues 1 to 63 (MSESAPAGSK…RSSMEQPTFR (63 aa)). The segment covering 21–30 (PEPRTSKDQQ) has biased composition (basic and acidic residues). Ser44 carries the post-translational modification Phosphoserine. A Phosphothreonine modification is found at Thr48. Residues Ser98 and Ser102 each carry the phosphoserine modification.

The protein belongs to the universal stress protein A family.

It is found in the barrier septum. Its subcellular location is the cell tip. In Schizosaccharomyces pombe (strain 972 / ATCC 24843) (Fission yeast), this protein is Universal stress protein A family protein C25B2.10.